Consider the following 568-residue polypeptide: Keratin, type I cytoskeletal 10 (568 aa).

The span at 1-15 (MSVRYSSSKQYSSSR) shows a compositional bias: low complexity. The tract at residues 1 to 31 (MSVRYSSSKQYSSSRSGGGGGGGGGSSFRIS) is disordered. The head stretch occupies residues 1 to 135 (MSVRYSSSKQ…GGDGGLLSGN (135 aa)). A phosphoserine mark is found at Ser14, Ser16, Ser36, Ser47, Ser50, and Ser160. Gly residues predominate over residues 16–26 (SGGGGGGGGGS). Residues 136 to 171 (EKVTMQNLNDRLASYLDKVRALEESNYELEGKIKEW) form a coil 1A region. One can recognise an IF rod domain in the interval 136-450 (EKVTMQNLND…SLLEGEGSSG (315 aa)). Residues 172-192 (YEKHGNSSQRAPRDYSKYYQT) are linker 1. Positions 193–284 (IEDLKNQILN…KNHEEEMRDL (92 aa)) are coil 1B. A linker 12 region spans residues 285–307 (QNVSTGDVNVEMNAAPGVDLTEL). The coil 2 stretch occupies residues 308 to 446 (LNNMRNQYEQ…QTYRSLLEGE (139 aa)). The tract at residues 447 to 568 (GSSGGGGYGG…GESSSKGPRY (122 aa)) is tail. The segment covering 485 to 546 (GGGSSGGGGH…GGGYGGGSSS (62 aa)) has biased composition (gly residues). The tract at residues 485-568 (GGGSSGGGGH…GESSSKGPRY (84 aa)) is disordered. Residues 547-568 (SGGHKSSSSGSVGESSSKGPRY) are compositionally biased toward low complexity.

Belongs to the intermediate filament family. As to quaternary structure, heterotetramer of two type I and two type II keratins. Heterodimer with KRT1. Two heterodimers of KRT1 and KRT10 form a heterotetramer. The KRT10 subunit in the heterotetramer is probably disulfide-linked. Expressed in skin.

Its subcellular location is the secreted. It is found in the extracellular space. It localises to the cell surface. The protein resides in the cytoplasm. Functionally, plays a role in the establishment of the epidermal barrier on plantar skin. Involved in the maintenance of cell layer development and keratin filament bundles in suprabasal cells of the epithelium. This chain is Keratin, type I cytoskeletal 10, found in Canis lupus familiaris (Dog).